The sequence spans 388 residues: Succinate--CoA ligase [ADP-forming] subunit beta (388 aa).

The region spanning 9-244 (KQLFAEFGLP…PSQEDKREAH (236 aa)) is the ATP-grasp domain. ATP-binding positions include Lys-46, 53 to 55 (GRG), Glu-99, Ser-102, and Glu-107. Mg(2+) contacts are provided by Asn-199 and Asp-213. Substrate is bound by residues Asn-264 and 321 to 323 (GIV).

The protein belongs to the succinate/malate CoA ligase beta subunit family. In terms of assembly, heterotetramer of two alpha and two beta subunits. Requires Mg(2+) as cofactor.

It catalyses the reaction succinate + ATP + CoA = succinyl-CoA + ADP + phosphate. The catalysed reaction is GTP + succinate + CoA = succinyl-CoA + GDP + phosphate. Its pathway is carbohydrate metabolism; tricarboxylic acid cycle; succinate from succinyl-CoA (ligase route): step 1/1. In terms of biological role, succinyl-CoA synthetase functions in the citric acid cycle (TCA), coupling the hydrolysis of succinyl-CoA to the synthesis of either ATP or GTP and thus represents the only step of substrate-level phosphorylation in the TCA. The beta subunit provides nucleotide specificity of the enzyme and binds the substrate succinate, while the binding sites for coenzyme A and phosphate are found in the alpha subunit. This is Succinate--CoA ligase [ADP-forming] subunit beta from Vibrio vulnificus (strain CMCP6).